Here is a 395-residue protein sequence, read N- to C-terminus: Elongation factor Tu (395 aa).

Residues Lys10–Gln204 form the tr-type G domain. The interval Gly19–Thr26 is G1. Residue Gly19 to Thr26 participates in GTP binding. A Mg(2+)-binding site is contributed by Thr26. Residues Gly60–Ser64 form a G2 region. Residues Asp81 to Gly84 form a G3 region. GTP contacts are provided by residues Asp81 to His85 and Asn136 to Asp139. The G4 stretch occupies residues Asn136–Asp139. The G5 stretch occupies residues Ser174–Leu176.

The protein belongs to the TRAFAC class translation factor GTPase superfamily. Classic translation factor GTPase family. EF-Tu/EF-1A subfamily. In terms of assembly, monomer.

Its subcellular location is the cytoplasm. The catalysed reaction is GTP + H2O = GDP + phosphate + H(+). In terms of biological role, GTP hydrolase that promotes the GTP-dependent binding of aminoacyl-tRNA to the A-site of ribosomes during protein biosynthesis. The chain is Elongation factor Tu from Geobacillus kaustophilus (strain HTA426).